A 252-amino-acid chain; its full sequence is MSTSTVIRPVARSLLQLRKAGNTPPAFLLPCLQSSSTTSSCTQSTSFSTSSTHLYPRDMNRLRGVSTQRRTGPRQPLSVSNAKLPQPVLDESKRLKVKVDENHGLYEFFRHKDKALSTPAEEGSHGRPWSAEELRGKSWEDLHSLWWICCKERNRIATESYERQRLEAGYGDEDAEKRDMTVRRTQRAIKQVLTERYYSWQEAEVIAKDDPEIDFSGEGPLYTPRDFEEEFEEDVLAEAEGEAEPKPAQVTA.

The transit peptide at 1–39 (MSTSTVIRPVARSLLQLRKAGNTPPAFLLPCLQSSSTTS) directs the protein to the mitochondrion. Over residues 233–242 (EDVLAEAEGE) the composition is skewed to acidic residues. Positions 233–252 (EDVLAEAEGEAEPKPAQVTA) are disordered.

It belongs to the universal ribosomal protein uL29 family. Component of the mitochondrial large ribosomal subunit. Mature mitochondrial ribosomes consist of a small (37S) and a large (54S) subunit. The 37S subunit contains at least 33 different proteins and 1 molecule of RNA (15S). The 54S subunit contains at least 45 different proteins and 1 molecule of RNA (21S).

The protein resides in the mitochondrion. The polypeptide is Large ribosomal subunit protein uL29m (mrpl4) (Botryotinia fuckeliana (strain B05.10) (Noble rot fungus)).